Reading from the N-terminus, the 97-residue chain is Large ribosomal subunit protein uL23 (97 aa).

Belongs to the universal ribosomal protein uL23 family. Part of the 50S ribosomal subunit. Contacts protein L29, and trigger factor when it is bound to the ribosome.

In terms of biological role, one of the early assembly proteins it binds 23S rRNA. One of the proteins that surrounds the polypeptide exit tunnel on the outside of the ribosome. Forms the main docking site for trigger factor binding to the ribosome. This is Large ribosomal subunit protein uL23 from Thermoanaerobacter pseudethanolicus (strain ATCC 33223 / 39E) (Clostridium thermohydrosulfuricum).